We begin with the raw amino-acid sequence, 168 residues long: Ribosome maturation factor RimM (168 aa).

Residues 92 to 166 (EDTFYKADLI…RITVDPIEGM (75 aa)) enclose the PRC barrel domain.

This sequence belongs to the RimM family. Binds ribosomal protein uS19.

It localises to the cytoplasm. Functionally, an accessory protein needed during the final step in the assembly of 30S ribosomal subunit, possibly for assembly of the head region. Essential for efficient processing of 16S rRNA. May be needed both before and after RbfA during the maturation of 16S rRNA. It has affinity for free ribosomal 30S subunits but not for 70S ribosomes. This Alkaliphilus metalliredigens (strain QYMF) protein is Ribosome maturation factor RimM.